The sequence spans 22 residues: Major outer membrane protein (22 aa).

This sequence belongs to the Gram-negative porin family. In terms of assembly, disulfide bond interactions within and between MOMP molecules and other components form high molecular-weight oligomers.

The protein resides in the cell outer membrane. Its function is as follows. Structural rigidity of the outer membrane of elementary bodies and porin forming, permitting diffusion of solutes through the intracellular reticulate body membrane. In Avibacterium gallinarum (Pasteurella gallinarum), this protein is Major outer membrane protein (ompH).